The sequence spans 949 residues: Valine--tRNA ligase (949 aa).

Positions 40 to 50 match the 'HIGH' region motif; sequence PNVTGSLHMGH. Residues 553-557 carry the 'KMSKS' region motif; it reads KMSKS. Position 556 (K556) interacts with ATP. Residues 877 to 949 are a coiled coil; it reads MAGLIDKEAE…QEQQDKIKAL (73 aa).

This sequence belongs to the class-I aminoacyl-tRNA synthetase family. ValS type 1 subfamily. Monomer.

Its subcellular location is the cytoplasm. It catalyses the reaction tRNA(Val) + L-valine + ATP = L-valyl-tRNA(Val) + AMP + diphosphate. Catalyzes the attachment of valine to tRNA(Val). As ValRS can inadvertently accommodate and process structurally similar amino acids such as threonine, to avoid such errors, it has a 'posttransfer' editing activity that hydrolyzes mischarged Thr-tRNA(Val) in a tRNA-dependent manner. The protein is Valine--tRNA ligase of Idiomarina loihiensis (strain ATCC BAA-735 / DSM 15497 / L2-TR).